Consider the following 3256-residue polypeptide: Proliferation marker protein Ki-67 (3256 aa).

Residues 27 to 76 enclose the FHA domain; the sequence is CLFGRGIECDIRIQLPVVSKQHCKIEIHEQEAILHNFSSTNPTQVNGSVI. Positions 101–199 are disordered; it reads SLQNGRKSTE…RNGRNAADPI (99 aa). Residues 107–122 are compositionally biased toward basic and acidic residues; that stretch reads KSTEFPRKIREQEPAR. Residues serine 125, serine 128, and serine 166 each carry the phosphoserine modification. Basic and acidic residues predominate over residues 161–173; that stretch reads NVKEDSTADDSKD. Residues 174 to 183 show a composition bias toward polar residues; it reads SVAQGTTNVH. Residue lysine 245 forms a Glycyl lysine isopeptide (Lys-Gly) (interchain with G-Cter in SUMO2) linkage. Residues serine 264, serine 296, and serine 308 each carry the phosphoserine modification. Disordered stretches follow at residues 271–426 and 513–542; these read ATEK…RGSI and RPELFDENLPPNTPLKRGEAPTKRKSLVMH. Residues 314 to 324 show a composition bias toward basic and acidic residues; the sequence is DQNKGKGRDVE. A phosphothreonine mark is found at threonine 328 and threonine 347. The span at 349–358 shows a compositional bias: polar residues; sequence VQYSQQQNSP. A phosphoserine mark is found at serine 352, serine 357, and serine 374. Phosphothreonine is present on threonine 401. Serine 411 is modified (phosphoserine). Residues 414–425 are compositionally biased toward polar residues; the sequence is KPENLSSKTRGS. Residues 495–678 form a positively charged patch (CP) region; sequence ESEGIPLKRR…AKQTQTKVIK (184 aa). The region spanning 502-549 is the PP1-binding domain; it reads KRRRVSFGGHLRPELFDENLPPNTPLKRGEAPTKRKSLVMHTPPVLKK. A Phosphoserine modification is found at serine 538. Threonine 543 carries the phosphothreonine modification. The disordered stretch occupies residues 575 to 632; that stretch reads SLVISPPAPSPRKTPVASDQRRRSCKTAPASSSKSQTEVPKRGGRKSGNLPSKRVSIS. Serine 579 and serine 584 each carry phosphoserine. Residues 603-612 are compositionally biased toward polar residues; sequence PASSSKSQTE. Serine 648 is subject to Phosphoserine. Residues 674 to 707 form a disordered region; it reads TKVIKHGPQRSMNKRQRRPATPKKPVGEVHSQFS. The span at 676-694 shows a compositional bias: basic residues; the sequence is VIKHGPQRSMNKRQRRPAT. A Phosphothreonine modification is found at threonine 761. The disordered stretch occupies residues 853-886; sequence SLETKTSDTETEPSKTVSTANRSGRSTEFRNIQK. At serine 859 the chain carries Phosphoserine. The span at 866–882 shows a compositional bias: polar residues; it reads SKTVSTANRSGRSTEFR. The interval 1000-2928 is 16 X 122 AA approximate repeats; the sequence is GKITKMPCQS…ASFQELSQTP (1929 aa). 6 K167R repeats span residues 1001–1112, 1123–1234, 1245–1356, 1367–1477, 1488–1597, and 1609–1720; these read KITK…FQTP, KTTK…FQTP, KTTK…LFQT, and KTAK…FQTP. The residue at position 1017 (threonine 1017) is a Phosphothreonine. Residues lysine 1022 and lysine 1035 each participate in a glycyl lysine isopeptide (Lys-Gly) (interchain with G-Cter in SUMO2) cross-link. The disordered stretch occupies residues 1045-1073; it reads TRTSGETTHTHREPAGDGKSIRTFKESPK. Basic and acidic residues predominate over residues 1052–1072; it reads THTHREPAGDGKSIRTFKESP. Position 1071 is a phosphoserine (serine 1071). Threonine 1091 carries the phosphothreonine modification. Residue lysine 1093 forms a Glycyl lysine isopeptide (Lys-Gly) (interchain with G-Cter in SUMO1); alternate linkage. Residue lysine 1093 forms a Glycyl lysine isopeptide (Lys-Gly) (interchain with G-Cter in SUMO2); alternate linkage. Serine 1098 carries the phosphoserine modification. The disordered stretch occupies residues 1109-1151; sequence FQTPGPSEESMTDEKTTKIACKSPPPESVDTPTSTKQWPKRSL. Threonine 1111 bears the Phosphothreonine mark. Serine 1131 is subject to Phosphoserine. The residue at position 1139 (threonine 1139) is a Phosphothreonine. Serine 1142 is modified (phosphoserine). Threonine 1167 is modified (phosphothreonine). A Phosphoserine modification is found at serine 1169. Threonine 1176 bears the Phosphothreonine mark. Residues lysine 1185 and lysine 1188 each participate in a glycyl lysine isopeptide (Lys-Gly) (interchain with G-Cter in SUMO2) cross-link. Position 1193 is a phosphothreonine (threonine 1193). Phosphoserine is present on serine 1207. Phosphothreonine is present on threonine 1233. The segment at 1246–1276 is disordered; that stretch reads TTKIPCDSPQSDPVDTPTSTKQRPKRSIRKA. A phosphoserine mark is found at serine 1253 and serine 1256. Polar residues predominate over residues 1253-1266; that stretch reads SPQSDPVDTPTSTK. Residues threonine 1261, threonine 1298, threonine 1315, and threonine 1327 each carry the phosphothreonine modification. The disordered stretch occupies residues 1323–1518; that stretch reads TENLTGSKRR…PQSKRSLRKV (196 aa). Position 1329 is a phosphoserine (serine 1329). Threonine 1335 carries the post-translational modification Phosphothreonine. Lysine 1337 participates in a covalent cross-link: Glycyl lysine isopeptide (Lys-Gly) (interchain with G-Cter in SUMO2). At threonine 1355 the chain carries Phosphothreonine. The residue at position 1376 (serine 1376) is a Phosphoserine. Threonine 1383 carries the post-translational modification Phosphothreonine. Serine 1386 carries the phosphoserine modification. Composition is skewed to basic and acidic residues over residues 1394–1406 and 1418–1442; these read PLEKRDVQKELSA and THTDKVPGGEDKSINAFRETAKQKL. Residues threonine 1420 and threonine 1437 each carry the phosphothreonine modification. Serine 1496 is subject to Phosphoserine. Phosphothreonine is present on threonine 1503. At serine 1506 the chain carries Phosphoserine. At threonine 1540 the chain carries Phosphothreonine. Position 1552 is a phosphotyrosine (tyrosine 1552). Residues threonine 1557 and threonine 1569 each carry the phosphothreonine modification. A phosphoserine mark is found at serine 1571 and serine 1617. Residues 1597-1675 are disordered; sequence TRGHTEESMT…PTGDGKSMKA (79 aa). Position 1639 is an N6-acetyllysine (lysine 1639). Lysine 1643 participates in a covalent cross-link: Glycyl lysine isopeptide (Lys-Gly) (interchain with G-Cter in SUMO2). The segment covering 1660 to 1672 has biased composition (basic and acidic residues); sequence THTHTEPTGDGKS. Residues serine 1679 and serine 1689 each carry the phosphoserine modification. Disordered regions lie at residues 1689-1708, 1717-1765, 1771-1790, 1801-1824, and 1839-1886; these read SLTGSKRQLRTPKGKSEVPE, FQTP…ADTE, FRKQTPSAGKAMHTPKPAVG, TPVQKLDQPGNLPGSNRRLQTRKE, and FQTP…KADV. Lysine 1703 is covalently cross-linked (Glycyl lysine isopeptide (Lys-Gly) (interchain with G-Cter in SUMO2)). The residue at position 1719 (threonine 1719) is a Phosphothreonine. Phosphoserine is present on serine 1721. Positions 1722 to 1733 are enriched in basic and acidic residues; it reads HTKESMTNEKTT. K167R repeat units lie at residues 1731–1842, 1854–1964, 1975–2086, 2097–2204, and 2215–2326; these read KTTK…FQTP, TKKI…FQTP, and KITE…FQTP. Serine 1740 bears the Phosphoserine mark. Residues threonine 1747, threonine 1764, threonine 1784, and threonine 1801 each carry the phosphothreonine modification. The residue at position 1815 (serine 1815) is a Phosphoserine. Threonine 1841 is subject to Phosphothreonine. Phosphoserine is present on residues serine 1861 and serine 1864. Polar residues predominate over residues 1861-1874; that stretch reads SPQSDPADTPTNTK. Threonine 1869, threonine 1897, threonine 1906, and threonine 1923 each carry phosphothreonine. At serine 1937 the chain carries Phosphoserine. A disordered region spans residues 1961-2002; that stretch reads FQTPGHTEESMTDDKITEVSCKSPQPDPVKTPTSSKQRLKIS. A Phosphothreonine modification is found at threonine 1963. Residues 1966 to 1977 show a composition bias toward basic and acidic residues; it reads HTEESMTDDKIT. Position 1983 is a phosphoserine (serine 1983). The residue at position 2005 (lysine 2005) is an N6-acetyllysine. Lysine 2009 participates in a covalent cross-link: Glycyl lysine isopeptide (Lys-Gly) (interchain with G-Cter in SUMO1); alternate. A Glycyl lysine isopeptide (Lys-Gly) (interchain with G-Cter in SUMO2); alternate cross-link involves residue lysine 2009. Residues 2017 to 2192 are disordered; sequence KLTQTSGKTT…TPKGKAQPLE (176 aa). 2 positions are modified to phosphothreonine: threonine 2028 and threonine 2065. Composition is skewed to basic and acidic residues over residues 2028–2046 and 2061–2070; these read THRETAGDGKSIKAFKESA and RWPRTPKEEA. A Glycyl lysine isopeptide (Lys-Gly) (interchain with G-Cter in SUMO1); alternate cross-link involves residue lysine 2067. A Glycyl lysine isopeptide (Lys-Gly) (interchain with G-Cter in SUMO2); alternate cross-link involves residue lysine 2067. Serine 2072 bears the Phosphoserine mark. Threonine 2085 carries the post-translational modification Phosphothreonine. Over residues 2087–2099 the composition is skewed to basic and acidic residues; that stretch reads DHTEESTTDDKTT. Serine 2105 carries the post-translational modification Phosphoserine. The residue at position 2113 (threonine 2113) is a Phosphothreonine. Residues serine 2116 and serine 2135 each carry the phosphoserine modification. Residues 2145-2168 show a composition bias toward basic and acidic residues; that stretch reads HTDKVPGDEDKGINVFRETAKQKL. Phosphothreonine is present on residues threonine 2146, threonine 2163, and threonine 2203. The tract at residues 2205 to 2400 is disordered; that stretch reads ICTDKPTTHE…KPAVSDEKNI (196 aa). Serine 2223 carries the post-translational modification Phosphoserine. Phosphothreonine is present on residues threonine 2231 and threonine 2233. The residue at position 2239 (serine 2239) is a Phosphoserine. Phosphothreonine is present on threonine 2259. Serine 2261 carries the post-translational modification Phosphoserine. A phosphothreonine mark is found at threonine 2268, threonine 2285, threonine 2325, threonine 2328, and threonine 2333. 5 K167R repeats span residues 2336–2447, 2458–2569, 2580–2688, 2700–2805, and 2819–2928; these read KTTK…FQTP, KITE…FSAP, KNTK…LSET, KATK…GFKD, and KTTK…SQTP. Serine 2344 is modified (phosphoserine). Threonine 2352 and threonine 2389 each carry phosphothreonine. The residue at position 2395 (serine 2395) is a Phosphoserine. At threonine 2406 the chain carries Phosphothreonine. A Phosphoserine modification is found at serine 2420. 2 positions are modified to phosphothreonine: threonine 2426 and threonine 2446. The segment at 2445–2480 is disordered; it reads QTPGHTEESMTDDKITEVSCKSPQPESFKTSRSSKQ. Over residues 2449–2460 the composition is skewed to basic and acidic residues; sequence HTEESMTDDKIT. A compositionally biased stretch (polar residues) spans 2463-2475; that stretch reads SCKSPQPESFKTS. Serine 2466 is subject to Phosphoserine. Residue lysine 2492 forms a Glycyl lysine isopeptide (Lys-Gly) (interchain with G-Cter in SUMO1) linkage. Residues 2497–2521 form a disordered region; the sequence is AVSKLTRTSGETTQTHTEPTGDSKS. Residues 2501-2514 are compositionally biased toward polar residues; the sequence is LTRTSGETTQTHTE. Serine 2505, serine 2528, and serine 2588 each carry phosphoserine. The tract at residues 2570–3256 is disordered; the sequence is GHTEESMTID…TRSHRDSEDI (687 aa). Basic and acidic residues-rich tracts occupy residues 2609–2618, 2632–2644, and 2660–2675; these read RKEVKEELSA, THKEPASGDEGIK, and EPSRRRPRAPKEKAQP. Residue lysine 2613 forms a Glycyl lysine isopeptide (Lys-Gly) (interchain with G-Cter in SUMO1); alternate linkage. Lysine 2613 participates in a covalent cross-link: Glycyl lysine isopeptide (Lys-Gly) (interchain with G-Cter in SUMO2); alternate. Phosphoserine is present on serine 2638. Residues 2685 to 2696 are compositionally biased toward polar residues; sequence LSETSGHTQESL. Phosphoserine is present on serine 2708. Lysine 2734 participates in a covalent cross-link: Glycyl lysine isopeptide (Lys-Gly) (interchain with G-Cter in SUMO1); alternate. Lysine 2734 participates in a covalent cross-link: Glycyl lysine isopeptide (Lys-Gly) (interchain with G-Cter in SUMO2); alternate. Composition is skewed to basic and acidic residues over residues 2751–2770 and 2810–2821; these read DADKEPAGEDKGIKALKESA and HTEESMTDDKTT. Serine 2827, serine 2828, and serine 2838 each carry phosphoserine. Lysine 2852 participates in a covalent cross-link: Glycyl lysine isopeptide (Lys-Gly) (interchain with G-Cter in SUMO1); alternate. Lysine 2852 is covalently cross-linked (Glycyl lysine isopeptide (Lys-Gly) (interchain with G-Cter in SUMO2); alternate). Residues 2869–2881 show a composition bias toward basic and acidic residues; that stretch reads THTDKEPVGEGKG. The span at 2941–2951 shows a compositional bias: polar residues; the sequence is SFTSAPKQTPD. Lysine 2967 is covalently cross-linked (Glycyl lysine isopeptide (Lys-Gly) (interchain with G-Cter in SUMO2)). The span at 2982–2991 shows a compositional bias: polar residues; the sequence is KSQSKSNTSL. Lysine 2986 carries the N6-acetyllysine modification. Basic residues predominate over residues 3029 to 3039; sequence KKQRVAPRARG. 3034 to 3041 contacts ATP; that stretch reads APRARGKS. Position 3041 is a phosphoserine (serine 3041). Basic and acidic residues-rich tracts occupy residues 3071–3080 and 3113–3124; these read KTNKEEHKLQ and ERIEINRNEKKP. Serine 3128 carries the post-translational modification Phosphoserine. The span at 3138 to 3154 shows a compositional bias: basic and acidic residues; that stretch reads DGARKPIPRDKVTENKR. Residues 3207 to 3223 are compositionally biased toward polar residues; sequence SQPAASTLESKSVQRVT. A compositionally biased stretch (basic and acidic residues) spans 3228–3241; the sequence is RCAENPKKAEDNVC.

As to quaternary structure, interacts with KIF15. Interacts (via the FHA domain) with NIFK. Interacts with PPP1CC. Component of a complex at least composed of ZNF335, HCFC1, CCAR2, EMSY, MKI67, RBBP5, ASH2L and WDR5; the complex is formed as a result of interactions between components of a nuclear receptor-mediated transcription complex and a histone methylation complex. Interacts with ZNF335. Hyperphosphorylated by CDK1 in mitosis; hyperphosphorylatiom prevents undergoing liquid-liquid phase separation. Dephosphorylated by PPP1CC at the onset of anaphase. Dephosphorylated by protein phosphatase 2A (PP2A) at the onset of anaphase. Dephosphorylation by protein phosphatase 2A (PP2A) and simultaneous exposure of the positively charged patch (CP) during mitotic exit induce the RNA-dependent formation of a liquid-like condensed phase on the chromosome surface. In terms of processing, ubiquitinated by the APC/C complex after neuronal progenitors exit mitosis during brain development, leading to clearance from constitutive heterochromatin.

The protein localises to the chromosome. The protein resides in the nucleus. It localises to the nucleolus. Its function is as follows. Protein that associates with the surface of mitotic chromosomes and acts both as a chromosome repellent during early mitosis and chromosome attractant during late mitosis. Required to maintain individual mitotic chromosomes dispersed in the cytoplasm following nuclear envelope disassembly. During early mitosis, relocalizes from nucleoli to the chromosome surface where it forms extended brush structures that cover a substantial fraction of the chromosome surface. The MKI67 brush structure prevents chromosomes from collapsing into a single chromatin mass by forming a steric and electrostatic charge barrier: the protein has a high net electrical charge and acts as a surfactant, dispersing chromosomes and enabling independent chromosome motility. During mitotic anaphase, the MKI67 brush structure collapses and MKI67 switches from a chromosome repellent to a chromosome attractant to promote chromosome clustering and facilitate the exclusion of large cytoplasmic particles from the future nuclear space. Mechanistically, dephosphorylation during mitotic exit and simultaneous exposure of a conserved basic patch induce the RNA-dependent formation of a liquid-like condensed phase on the chromosome surface, promoting coalescence of neighboring chromosome surfaces and clustering of chromosomes. Binds premature ribosomal RNAs during anaphase; promoting liquid-liquid phase separation. Binds DNA, with a preference for supercoiled DNA and AT-rich DNA. Does not contribute to the internal structure of mitotic chromosomes. May play a role in chromatin organization; it is however unclear whether it plays a direct role in chromatin organization or whether it is an indirect consequence of its function in mitotic chromosome. This chain is Proliferation marker protein Ki-67, found in Homo sapiens (Human).